A 585-amino-acid polypeptide reads, in one-letter code: Aspartate--tRNA ligase (585 aa).

E171 contributes to the L-aspartate binding site. The aspartate stretch occupies residues 195-198 (QLFK). R217 is a binding site for L-aspartate. Residues 217–219 (RDE) and Q226 each bind ATP. H448 provides a ligand contact to L-aspartate. E482 serves as a coordination point for ATP. R489 contributes to the L-aspartate binding site. Residue 534–537 (GLDR) participates in ATP binding.

It belongs to the class-II aminoacyl-tRNA synthetase family. Type 1 subfamily. In terms of assembly, homodimer.

It is found in the cytoplasm. It catalyses the reaction tRNA(Asp) + L-aspartate + ATP = L-aspartyl-tRNA(Asp) + AMP + diphosphate. Catalyzes the attachment of L-aspartate to tRNA(Asp) in a two-step reaction: L-aspartate is first activated by ATP to form Asp-AMP and then transferred to the acceptor end of tRNA(Asp). The sequence is that of Aspartate--tRNA ligase from Histophilus somni (strain 129Pt) (Haemophilus somnus).